The sequence spans 355 residues: Probable nitronate monooxygenase (355 aa).

FMN contacts are provided by residues Asn71, Gln175, Gly180, Gly219, and 238 to 241; that span reads QMGT.

This sequence belongs to the nitronate monooxygenase family. NMO class I subfamily. It depends on FMN as a cofactor.

It catalyses the reaction 3 propionate 3-nitronate + 3 O2 + H2O = 3 3-oxopropanoate + 2 nitrate + nitrite + H2O2 + 3 H(+). Functionally, nitronate monooxygenase that uses molecular oxygen to catalyze the oxidative denitrification of alkyl nitronates. Acts on propionate 3-nitronate (P3N), the presumed physiological substrate. Probably functions in the detoxification of P3N, a metabolic poison produced by plants and fungi as a defense mechanism. The polypeptide is Probable nitronate monooxygenase (Staphylococcus saprophyticus subsp. saprophyticus (strain ATCC 15305 / DSM 20229 / NCIMB 8711 / NCTC 7292 / S-41)).